A 513-amino-acid polypeptide reads, in one-letter code: Membrane protein (513 aa).

4 repeat units span residues 9–11 (PSA), 12–14 (PSA), 15–17 (PSA), and 18–20 (PSA). Residues 9-20 (PSAPSAPSAPSA) form a 4 X 3 AA tandem repeats of P-S-A region. Transmembrane regions (helical) follow at residues 32–52 (LTLH…LAIP), 56–76 (GLTV…VVWI), 79–99 (AVSY…LIGF), 126–146 (TALA…VTGL), 165–185 (ILIG…SATA), 208–228 (NIAA…NVGI), 254–274 (QWLI…YFLV), 309–329 (LAAV…LHSF), 332–352 (ATVT…VMDW), 360–380 (PWGT…LLST), 400–420 (GALL…LGFA), 422–442 (ATAL…TLPG), 447–467 (VGMT…PINA), and 487–507 (IGIP…ATYW).

This sequence belongs to the SLC13A/DASS transporter (TC 2.A.47) family. DIT1 subfamily.

It is found in the cell membrane. The polypeptide is Membrane protein (Cupriavidus necator (strain ATCC 17699 / DSM 428 / KCTC 22496 / NCIMB 10442 / H16 / Stanier 337) (Ralstonia eutropha)).